A 306-amino-acid chain; its full sequence is MEVTFFGTSAGLPTKERNTQSIALNLEPYSNSIWLFDVGEGTQHQILRHSIKLGKIDHIFITHMHGDHIFGLPGLLTSRSFQGGENKPLTIIGPKGIQNYIETSLQLSESHLNYPITYIEINQQLAYHHNGFTVQAEMLNHGIPSFGYRIEAPITPGTINVEALRGIGLEPGPKYQEVKLQETFEYKGLIYNSDDFKGKAKPGPIISIFGDTKPCENEYELAKNSDLMIHEATYIEGDKKLANNYHHSHIDDVFNLIKQANVNKSLITHISNRYNIDEVTSIYNELSLDQTSPHFYFVKDFDTFKI.

The Zn(2+) site is built by His63, His65, Asp67, His68, His141, Asp211, and His269. The active-site Proton acceptor is the Asp67.

This sequence belongs to the RNase Z family. Homodimer. It depends on Zn(2+) as a cofactor.

It carries out the reaction Endonucleolytic cleavage of RNA, removing extra 3' nucleotides from tRNA precursor, generating 3' termini of tRNAs. A 3'-hydroxy group is left at the tRNA terminus and a 5'-phosphoryl group is left at the trailer molecule.. Its function is as follows. Zinc phosphodiesterase, which displays some tRNA 3'-processing endonuclease activity. Probably involved in tRNA maturation, by removing a 3'-trailer from precursor tRNA. The polypeptide is Ribonuclease Z (Staphylococcus epidermidis (strain ATCC 35984 / DSM 28319 / BCRC 17069 / CCUG 31568 / BM 3577 / RP62A)).